The sequence spans 367 residues: MSAPLANDTFLRALRRQPTDYTPLWLMRQAGRYLPEYNATRARAGSFLGLAKSPAYATEVTLQPLDRYALDAAILFSDILTVPDAMGLGLSFAQGEGPRFAKPVRTEADVAALSVPDMSSLQYVFDAVAEIRRALVQDGRQRVPLIGFSGSPWTLACYMVEGGGSDDFRTVKSMLYARPDLMHRILEINAQAVIDYLNAQIDAGAQAVQVFDTWGGALADGIYQQFSLAYMARVVEGIRAGADGQRVPVILFTKGGGLWLEAMAETGADALGVDWTVNLQLARQRTAGRVALQGNLDPTVLFAEPDAIRAQVRRVLEDYAAGGGSDGHIFNLGHGISQFTPPEAVSVLVDEVHSFSRALRTKARSHG.

Residues 28-32, D78, Y158, T213, and H334 contribute to the substrate site; that span reads RQAGR.

It belongs to the uroporphyrinogen decarboxylase family. As to quaternary structure, homodimer.

The protein resides in the cytoplasm. The enzyme catalyses uroporphyrinogen III + 4 H(+) = coproporphyrinogen III + 4 CO2. Its pathway is porphyrin-containing compound metabolism; protoporphyrin-IX biosynthesis; coproporphyrinogen-III from 5-aminolevulinate: step 4/4. Catalyzes the decarboxylation of four acetate groups of uroporphyrinogen-III to yield coproporphyrinogen-III. This is Uroporphyrinogen decarboxylase from Ralstonia pickettii (strain 12J).